A 459-amino-acid polypeptide reads, in one-letter code: MPPWAAALALLLAALALLLLRPWKRAVGARTSVRDHEEQEVASGGPADQFSDRREALPGGCSLICKPSALAQCLLRALRRSAALEPSPRSWLSGPHLQTFCHFILPVGPGPELAREYLQLADDGLVALDWVIGPCARGRRVTNPGSLPPVLLVIPNAWGRLTRNVLGLCLLALERGYYPVIFHRRGHHGCPLVSPRLQPFGDPSDLKEAVTYIRFRHPAAPLFAVSEGSGSALLLSYLGECGSSSYVTGAACISPVLRCREWFEAGLPWPYERGFLLHQKISLSRYASALEDTVDTGKLFRSGSLREFEETLFCHTKSCPISWDTYWDLNDPLRDVDEAAVPVLCICSADDPVCGPPEHTLPAELFHSNPYFFLLLSHHGGHCGFLRPEPLPAWSHEVILESFRALTEFFRMEERMKGLSRRRTSFLGGRRRWGGLQKREVSPSSNLEEIFNWKRSYTR.

A signal peptide spans 1–28 (MPPWAAALALLLAALALLLLRPWKRAVG). Catalysis depends on charge relay system residues Asp-351 and His-382. A Phosphoserine modification is found at Ser-425.

The protein belongs to the AB hydrolase superfamily. AB hydrolase 4 family. In terms of assembly, interacts with PDE3B; this interaction regulates PDE3B's stability and expression and, thereby, impacts the antilipolytic action of insulin. Mainly expressed in adipocytes and adipose depots, followed by a weak expression in liver and pancreas. In white adipose tissue (WAT), only expressed in mature adipocytes and primary adipocytes differentiated from stromal vascular cells (SVCs), but not in undifferentiated SVCs.

Its subcellular location is the secreted. In terms of biological role, may regulate adipocyte lipolysis and liver lipid accumulation. The chain is Protein ABHD15 from Mus musculus (Mouse).